Reading from the N-terminus, the 123-residue chain is MPTINQLIAKGREVRAKRNKVPALQGCPQKRGVCTRVYTTTPKKPNSALRKVAKVRLTNGYEVVSYIPGEGHNLQEHSVVLIRGGRVKDLPGVRYHILRGVLDTQGIAKRRQRRSLYGAKRPK.

Aspartate 89 is subject to 3-methylthioaspartic acid.

This sequence belongs to the universal ribosomal protein uS12 family. In terms of assembly, part of the 30S ribosomal subunit. Contacts proteins S8 and S17. May interact with IF1 in the 30S initiation complex.

Its function is as follows. With S4 and S5 plays an important role in translational accuracy. Interacts with and stabilizes bases of the 16S rRNA that are involved in tRNA selection in the A site and with the mRNA backbone. Located at the interface of the 30S and 50S subunits, it traverses the body of the 30S subunit contacting proteins on the other side and probably holding the rRNA structure together. The combined cluster of proteins S8, S12 and S17 appears to hold together the shoulder and platform of the 30S subunit. In Acidiphilium cryptum (strain JF-5), this protein is Small ribosomal subunit protein uS12.